Here is a 224-residue protein sequence, read N- to C-terminus: Ribonuclease 3 (224 aa).

The RNase III domain maps to 5–127; it reads LERLCRRLNY…ILAAIYLDGG (123 aa). Glu-40 is a binding site for Mg(2+). Asp-44 is an active-site residue. Positions 113 and 116 each coordinate Mg(2+). Residue Glu-116 is part of the active site. The DRBM domain occupies 154–224; that stretch reads DAKTQLQEFL…AKAMLEQLQG (71 aa).

The protein belongs to the ribonuclease III family. As to quaternary structure, homodimer. Mg(2+) is required as a cofactor.

The protein localises to the cytoplasm. It catalyses the reaction Endonucleolytic cleavage to 5'-phosphomonoester.. In terms of biological role, digests double-stranded RNA. Involved in the processing of primary rRNA transcript to yield the immediate precursors to the large and small rRNAs (23S and 16S). Processes some mRNAs, and tRNAs when they are encoded in the rRNA operon. Processes pre-crRNA and tracrRNA of type II CRISPR loci if present in the organism. The sequence is that of Ribonuclease 3 from Legionella pneumophila subsp. pneumophila (strain Philadelphia 1 / ATCC 33152 / DSM 7513).